Reading from the N-terminus, the 340-residue chain is Glycerol-3-phosphate dehydrogenase [NAD(P)+] (340 aa).

NADPH-binding residues include serine 11, tryptophan 12, arginine 33, and lysine 106. Lysine 106, glycine 137, and serine 139 together coordinate sn-glycerol 3-phosphate. Alanine 141 is a binding site for NADPH. Residues lysine 192, aspartate 245, serine 255, arginine 256, and asparagine 257 each contribute to the sn-glycerol 3-phosphate site. Catalysis depends on lysine 192, which acts as the Proton acceptor. Arginine 256 provides a ligand contact to NADPH. Residues valine 280 and glutamate 282 each contribute to the NADPH site.

Belongs to the NAD-dependent glycerol-3-phosphate dehydrogenase family.

Its subcellular location is the cytoplasm. The enzyme catalyses sn-glycerol 3-phosphate + NAD(+) = dihydroxyacetone phosphate + NADH + H(+). It carries out the reaction sn-glycerol 3-phosphate + NADP(+) = dihydroxyacetone phosphate + NADPH + H(+). It functions in the pathway membrane lipid metabolism; glycerophospholipid metabolism. Its function is as follows. Catalyzes the reduction of the glycolytic intermediate dihydroxyacetone phosphate (DHAP) to sn-glycerol 3-phosphate (G3P), the key precursor for phospholipid synthesis. This Bacillus cereus (strain G9842) protein is Glycerol-3-phosphate dehydrogenase [NAD(P)+].